The sequence spans 103 residues: Small ribosomal subunit protein uS10 (103 aa).

It belongs to the universal ribosomal protein uS10 family. In terms of assembly, part of the 30S ribosomal subunit.

In terms of biological role, involved in the binding of tRNA to the ribosomes. This chain is Small ribosomal subunit protein uS10, found in Tolumonas auensis (strain DSM 9187 / NBRC 110442 / TA 4).